A 201-amino-acid chain; its full sequence is ATP-dependent Clp protease proteolytic subunit (201 aa).

The Nucleophile role is filled by serine 100. The active site involves histidine 125.

It belongs to the peptidase S14 family. In terms of assembly, component of the chloroplastic Clp protease core complex.

It localises to the plastid. Its subcellular location is the chloroplast stroma. The catalysed reaction is Hydrolysis of proteins to small peptides in the presence of ATP and magnesium. alpha-casein is the usual test substrate. In the absence of ATP, only oligopeptides shorter than five residues are hydrolyzed (such as succinyl-Leu-Tyr-|-NHMec, and Leu-Tyr-Leu-|-Tyr-Trp, in which cleavage of the -Tyr-|-Leu- and -Tyr-|-Trp bonds also occurs).. Its function is as follows. Cleaves peptides in various proteins in a process that requires ATP hydrolysis. Has a chymotrypsin-like activity. Plays a major role in the degradation of misfolded proteins. The protein is ATP-dependent Clp protease proteolytic subunit of Chloranthus spicatus (Chulantree).